Here is a 317-residue protein sequence, read N- to C-terminus: Transcription cofactor vestigial-like protein 2 (317 aa).

Disordered regions lie at residues 41–76 (CNAS…ERPP), 108–128 (SQPS…SSGP), 191–214 (TEPW…GGAL), and 253–293 (RLAT…PSGD). Over residues 44 to 57 (SPSSSGSGSSSFSS) the composition is skewed to low complexity. Basic and acidic residues predominate over residues 63–76 (IKEEEGSPEKERPP). A compositionally biased stretch (low complexity) spans 108-120 (SQPSSYSPSCTSS). Residues 196–206 (HAHPHHAHPHH) show a composition bias toward basic residues. Positions 272 to 292 (KGEPAGAAWAGPGGPFASPSG) are enriched in low complexity.

Belongs to the vestigial family. In terms of assembly, interacts with TEFs. Binds to TEAD1/TEF1. Skeletal muscle.

It is found in the nucleus. Functionally, may act as a specific coactivator for the mammalian TEFs. May play a role in the development of skeletal muscles. This is Transcription cofactor vestigial-like protein 2 (VGLL2) from Homo sapiens (Human).